A 167-amino-acid polypeptide reads, in one-letter code: Crossover junction endodeoxyribonuclease RuvC (167 aa).

Active-site residues include Asp14, Glu75, and Asp147. Residues Asp14, Glu75, and Asp147 each contribute to the Mg(2+) site.

This sequence belongs to the RuvC family. As to quaternary structure, homodimer which binds Holliday junction (HJ) DNA. The HJ becomes 2-fold symmetrical on binding to RuvC with unstacked arms; it has a different conformation from HJ DNA in complex with RuvA. In the full resolvosome a probable DNA-RuvA(4)-RuvB(12)-RuvC(2) complex forms which resolves the HJ. The cofactor is Mg(2+).

The protein resides in the cytoplasm. It catalyses the reaction Endonucleolytic cleavage at a junction such as a reciprocal single-stranded crossover between two homologous DNA duplexes (Holliday junction).. Its function is as follows. The RuvA-RuvB-RuvC complex processes Holliday junction (HJ) DNA during genetic recombination and DNA repair. Endonuclease that resolves HJ intermediates. Cleaves cruciform DNA by making single-stranded nicks across the HJ at symmetrical positions within the homologous arms, yielding a 5'-phosphate and a 3'-hydroxyl group; requires a central core of homology in the junction. The consensus cleavage sequence is 5'-(A/T)TT(C/G)-3'. Cleavage occurs on the 3'-side of the TT dinucleotide at the point of strand exchange. HJ branch migration catalyzed by RuvA-RuvB allows RuvC to scan DNA until it finds its consensus sequence, where it cleaves and resolves the cruciform DNA. The chain is Crossover junction endodeoxyribonuclease RuvC from Synechocystis sp. (strain ATCC 27184 / PCC 6803 / Kazusa).